Reading from the N-terminus, the 252-residue chain is 2-succinyl-6-hydroxy-2,4-cyclohexadiene-1-carboxylate synthase (252 aa).

The protein belongs to the AB hydrolase superfamily. MenH family. In terms of assembly, monomer.

It catalyses the reaction 5-enolpyruvoyl-6-hydroxy-2-succinyl-cyclohex-3-ene-1-carboxylate = (1R,6R)-6-hydroxy-2-succinyl-cyclohexa-2,4-diene-1-carboxylate + pyruvate. Its pathway is quinol/quinone metabolism; 1,4-dihydroxy-2-naphthoate biosynthesis; 1,4-dihydroxy-2-naphthoate from chorismate: step 3/7. It functions in the pathway quinol/quinone metabolism; menaquinone biosynthesis. Its function is as follows. Catalyzes a proton abstraction reaction that results in 2,5-elimination of pyruvate from 2-succinyl-5-enolpyruvyl-6-hydroxy-3-cyclohexene-1-carboxylate (SEPHCHC) and the formation of 2-succinyl-6-hydroxy-2,4-cyclohexadiene-1-carboxylate (SHCHC). This chain is 2-succinyl-6-hydroxy-2,4-cyclohexadiene-1-carboxylate synthase, found in Escherichia coli O8 (strain IAI1).